Reading from the N-terminus, the 293-residue chain is MNKEQLQQMRQAPGFVGALDQSGGSTPKALKAYGIQPDAYQSEEEMFDLIHQMRTRMITSPAFATGKIIGVILFERTMRGKIEGMPTADFLWEKRHIVPFLKVDKGLQDEANGVQLMKPFPELGKLCEEAVGYHVFGTKMRSVIKQANEQGIRDIVEQQFQWGKEILSHGLVPILEPEVDIHCPEKAKAEEILKRELLAQLDKMTEPVMLKITIPTVDNFYKEIIEHPMMLRVVALSGGYSREQANELLSRNHGVIASFSRALVEGLSVQQTDAEFNAMLEASIEDVYQASIK.

E176 (proton acceptor) is an active-site residue. Residue K211 is the Schiff-base intermediate with dihydroxyacetone-P of the active site.

It belongs to the class I fructose-bisphosphate aldolase family.

It carries out the reaction beta-D-fructose 1,6-bisphosphate = D-glyceraldehyde 3-phosphate + dihydroxyacetone phosphate. It functions in the pathway carbohydrate degradation; glycolysis; D-glyceraldehyde 3-phosphate and glycerone phosphate from D-glucose: step 4/4. This Porphyromonas gingivalis (strain ATCC 33277 / DSM 20709 / CIP 103683 / JCM 12257 / NCTC 11834 / 2561) protein is Fructose-bisphosphate aldolase class 1.